The primary structure comprises 333 residues: Potassium channel protein 1 (333 aa).

Topologically, residues 1 to 6 (METYEK) are cytoplasmic. A helical membrane pass occupies residues 7–27 (IELGIIVIILLILIESVILMT). Over 28-60 (VEGWDFFTAFYTAVVTISTVGYGDYTPQTFLGK) the chain is Extracellular. Residues 46-51 (TVGYGD) carry the Selectivity filter motif. A helical membrane pass occupies residues 61–81 (LSVIIYIFAGVGAVAYTMGNI). The Cytoplasmic segment spans residues 82–333 (ASFFIEGHFR…KLKRYVEGVE (252 aa)). The RCK N-terminal domain occupies 107 to 229 (NNHYIICGYG…GADRAVCPYI (123 aa)). The RCK C-terminal domain maps to 246 to 331 (EFIHSLVATE…LEKLKRYVEG (86 aa)).

Homotetramer.

Its subcellular location is the cell membrane. Functionally, potassium channel protein. Seems to conduct potassium at low membrane potentials. This Methanocaldococcus jannaschii (strain ATCC 43067 / DSM 2661 / JAL-1 / JCM 10045 / NBRC 100440) (Methanococcus jannaschii) protein is Potassium channel protein 1.